Consider the following 375-residue polypeptide: Actin (375 aa).

The protein belongs to the actin family.

Its subcellular location is the cytoplasm. It is found in the cytoskeleton. The catalysed reaction is ATP + H2O = ADP + phosphate + H(+). Its function is as follows. Actins are highly conserved proteins that are involved in various types of cell motility and are ubiquitously expressed in all eukaryotic cells. The polypeptide is Actin (Sterkiella cavicola (Ciliate)).